A 426-amino-acid polypeptide reads, in one-letter code: Serine--tRNA ligase (426 aa).

231–233 (TAE) is a binding site for L-serine. 262-264 (RSE) lines the ATP pocket. E285 contributes to the L-serine binding site. Residue 349–352 (EISS) coordinates ATP. Residue S385 coordinates L-serine.

Belongs to the class-II aminoacyl-tRNA synthetase family. Type-1 seryl-tRNA synthetase subfamily. As to quaternary structure, homodimer. The tRNA molecule binds across the dimer.

It localises to the cytoplasm. It catalyses the reaction tRNA(Ser) + L-serine + ATP = L-seryl-tRNA(Ser) + AMP + diphosphate + H(+). The catalysed reaction is tRNA(Sec) + L-serine + ATP = L-seryl-tRNA(Sec) + AMP + diphosphate + H(+). Its pathway is aminoacyl-tRNA biosynthesis; selenocysteinyl-tRNA(Sec) biosynthesis; L-seryl-tRNA(Sec) from L-serine and tRNA(Sec): step 1/1. Its function is as follows. Catalyzes the attachment of serine to tRNA(Ser). Is also able to aminoacylate tRNA(Sec) with serine, to form the misacylated tRNA L-seryl-tRNA(Sec), which will be further converted into selenocysteinyl-tRNA(Sec). The protein is Serine--tRNA ligase of Brevibacillus brevis (strain 47 / JCM 6285 / NBRC 100599).